The primary structure comprises 519 residues: Probable cytosol aminopeptidase (519 aa).

Mn(2+) contacts are provided by Lys251 and Asp256. Residue Lys263 is part of the active site. Mn(2+) contacts are provided by Asp274, Asp333, and Glu335. Arg337 is an active-site residue. Residues 487 to 502 (VAPAAPAAPAAPAARP) show a composition bias toward low complexity. The interval 487 to 519 (VAPAAPAAPAAPAARPAAKRTGRSQGGLKRTAP) is disordered.

It belongs to the peptidase M17 family. Mn(2+) serves as cofactor.

The protein localises to the cytoplasm. The enzyme catalyses Release of an N-terminal amino acid, Xaa-|-Yaa-, in which Xaa is preferably Leu, but may be other amino acids including Pro although not Arg or Lys, and Yaa may be Pro. Amino acid amides and methyl esters are also readily hydrolyzed, but rates on arylamides are exceedingly low.. It catalyses the reaction Release of an N-terminal amino acid, preferentially leucine, but not glutamic or aspartic acids.. In terms of biological role, presumably involved in the processing and regular turnover of intracellular proteins. Catalyzes the removal of unsubstituted N-terminal amino acids from various peptides. The polypeptide is Probable cytosol aminopeptidase (Verminephrobacter eiseniae (strain EF01-2)).